Reading from the N-terminus, the 192-residue chain is Peptide methionine sulfoxide reductase MsrA 1 (192 aa).

Residue Cys-25 is part of the active site.

The protein belongs to the MsrA Met sulfoxide reductase family.

It catalyses the reaction L-methionyl-[protein] + [thioredoxin]-disulfide + H2O = L-methionyl-(S)-S-oxide-[protein] + [thioredoxin]-dithiol. The catalysed reaction is [thioredoxin]-disulfide + L-methionine + H2O = L-methionine (S)-S-oxide + [thioredoxin]-dithiol. Its function is as follows. Has an important function as a repair enzyme for proteins that have been inactivated by oxidation. Catalyzes the reversible oxidation-reduction of methionine sulfoxide in proteins to methionine. In Rhodopirellula baltica (strain DSM 10527 / NCIMB 13988 / SH1), this protein is Peptide methionine sulfoxide reductase MsrA 1.